A 178-amino-acid polypeptide reads, in one-letter code: ATP synthase subunit delta (178 aa).

This sequence belongs to the ATPase delta chain family. In terms of assembly, F-type ATPases have 2 components, F(1) - the catalytic core - and F(0) - the membrane proton channel. F(1) has five subunits: alpha(3), beta(3), gamma(1), delta(1), epsilon(1). F(0) has three main subunits: a(1), b(2) and c(10-14). The alpha and beta chains form an alternating ring which encloses part of the gamma chain. F(1) is attached to F(0) by a central stalk formed by the gamma and epsilon chains, while a peripheral stalk is formed by the delta and b chains.

It is found in the cell inner membrane. Functionally, f(1)F(0) ATP synthase produces ATP from ADP in the presence of a proton or sodium gradient. F-type ATPases consist of two structural domains, F(1) containing the extramembraneous catalytic core and F(0) containing the membrane proton channel, linked together by a central stalk and a peripheral stalk. During catalysis, ATP synthesis in the catalytic domain of F(1) is coupled via a rotary mechanism of the central stalk subunits to proton translocation. Its function is as follows. This protein is part of the stalk that links CF(0) to CF(1). It either transmits conformational changes from CF(0) to CF(1) or is implicated in proton conduction. The chain is ATP synthase subunit delta from Aromatoleum aromaticum (strain DSM 19018 / LMG 30748 / EbN1) (Azoarcus sp. (strain EbN1)).